Consider the following 188-residue polypeptide: MNGDDAFARRPRAGSQIPEKIQKAFDDIAKYFSKKEWEKMKSSEKIIYVYMKRKYEAMTKLGFKATLPPFMCNTGATDLQGNDFDNDRNHRNQVERSQMTFGRLQGIFPKIMPKKPAEVGNDSKEVPEASGLQNDGKQLCPPGKPTTSEKINKASGPKRGKHAWTHRLRERKQLVIYEEISDPEEDDE.

The 64-residue stretch at 20-83 folds into the KRAB-related domain; the sequence is KIQKAFDDIA…TGATDLQGND (64 aa). Residues 114–165 form a disordered region; it reads KKPAEVGNDSKEVPEASGLQNDGKQLCPPGKPTTSEKINKASGPKRGKHAWT. Basic and acidic residues predominate over residues 115–127; the sequence is KPAEVGNDSKEVP. S123 bears the Phosphoserine mark. Residues 156-165 are compositionally biased toward basic residues; sequence GPKRGKHAWT.

It belongs to the SSX family. Not detected in any normal or tumor tissues.

Functionally, could act as a modulator of transcription. In Homo sapiens (Human), this protein is Putative protein SSX9.